Consider the following 548-residue polypeptide: CTL-like protein DDB_G0288717 (548 aa).

Positions methionine 1–histidine 44 are disordered. Asparagine 25 carries an N-linked (GlcNAc...) asparagine glycan. The helical transmembrane segment at isoleucine 52 to alanine 72 threads the bilayer. N-linked (GlcNAc...) asparagine glycosylation is present at asparagine 97. 4 helical membrane passes run aspartate 125–leucine 145, phenylalanine 151–phenylalanine 171, methionine 184–leucine 204, and proline 226–tryptophan 246. The N-linked (GlcNAc...) asparagine glycan is linked to asparagine 273. 2 helical membrane-spanning segments follow: residues asparagine 290–phenylalanine 310 and phenylalanine 350–leucine 370. Asparagine 377 is a glycosylation site (N-linked (GlcNAc...) asparagine). 3 helical membrane passes run lysine 381–valine 401, phenylalanine 442–phenylalanine 462, and isoleucine 479–isoleucine 499. N-linked (GlcNAc...) asparagine glycosylation is present at asparagine 544.

Belongs to the CTL (choline transporter-like) family.

It localises to the membrane. The sequence is that of CTL-like protein DDB_G0288717 from Dictyostelium discoideum (Social amoeba).